We begin with the raw amino-acid sequence, 523 residues long: Aldehyde oxidase GLOX (523 aa).

The signal sequence occupies residues 1 to 19 (MILDAAIVALADLPGTWEL).

It is found in the secreted. The protein localises to the cell wall. It carries out the reaction an aldehyde + O2 + H2O = a carboxylate + H2O2 + H(+). Functionally, catalyzes the oxidation of aldehydes to the corresponding carboxylate by coupling the reaction to the reduction of dioxygen to hydrogen peroxide. Substrates include glyoxal and other aldehydes. Involved in disease resistance against the grapevine powdery mildew E.necator. Is sufficient to confer disease resistance to E.necator. Can produce hydrogen peroxide in response to E.necator infection, and this may directly play a role in the defense mechanism during plant-pathogen interactions. In Vitis pseudoreticulata (Chinese wild grapevine), this protein is Aldehyde oxidase GLOX.